We begin with the raw amino-acid sequence, 608 residues long: DNA ligase (608 aa).

E266 provides a ligand contact to ATP. K268 acts as the N6-AMP-lysine intermediate in catalysis. ATP contacts are provided by R273, R288, E318, F358, R435, and K441.

The protein belongs to the ATP-dependent DNA ligase family. Mg(2+) serves as cofactor. Requires Mn(2+) as cofactor.

The catalysed reaction is ATP + (deoxyribonucleotide)n-3'-hydroxyl + 5'-phospho-(deoxyribonucleotide)m = (deoxyribonucleotide)n+m + AMP + diphosphate.. It catalyses the reaction ADP + (deoxyribonucleotide)n-3'-hydroxyl + 5'-phospho-(deoxyribonucleotide)m = (deoxyribonucleotide)n+m + AMP + phosphate.. It carries out the reaction GTP + (deoxyribonucleotide)n-3'-hydroxyl + 5'-phospho-(deoxyribonucleotide)m = (deoxyribonucleotide)n+m + GMP + diphosphate.. In terms of biological role, DNA ligase that seals nicks in double-stranded DNA during DNA replication, DNA recombination and DNA repair. Can use ATP, ADP and GTP, but not CTP, TTP or NAD(+). The sequence is that of DNA ligase from Hyperthermus butylicus (strain DSM 5456 / JCM 9403 / PLM1-5).